The primary structure comprises 430 residues: Histidine--tRNA ligase (430 aa).

Belongs to the class-II aminoacyl-tRNA synthetase family. Homodimer.

The protein localises to the cytoplasm. The enzyme catalyses tRNA(His) + L-histidine + ATP = L-histidyl-tRNA(His) + AMP + diphosphate + H(+). The sequence is that of Histidine--tRNA ligase from Acinetobacter baumannii (strain ACICU).